A 299-amino-acid polypeptide reads, in one-letter code: Peroxisomal biogenesis factor 19 (299 aa).

Positions M1–L63 are disordered. At A2 the chain carries N-acetylalanine. The segment at A2 to G56 is docking to the peroxisome membrane and binding to PEX3. The segment at A2–M91 is necessary for PEX19 function on peroxisome biogenesis. Residues R16–D27 are compositionally biased toward acidic residues. 3 positions are modified to phosphoserine: S35, S54, and S66. Residue T236 is modified to Phosphothreonine. C296 carries the post-translational modification Cysteine methyl ester. The S-farnesyl cysteine moiety is linked to residue C296. A propeptide spans L297–M299 (removed in mature form).

Belongs to the peroxin-19 family. Interacts with a broad range of peroxisomal membrane proteins, including PEX3, PEX10, PEX11A, PEX11B, PEX12, PEX13, PEX14 and PEX16, PXMP2/PMP22, PXMP4/PMP24, SLC25A17/PMP34, ABCD1/ALDP, ABCD2/ALDRP, and ABCD3/PMP70. Also interacts with the tumor suppressor CDKN2A/p19ARF. In terms of assembly, (Microbial infection) Interacts with human cytomegalovirus protein UL37 isoform vMIA; this interaction inhibits the peroxisomal-dependent antiviral signaling. Ubiquitously expressed. Isoform 1 is strongly predominant in all tissues except in utero where isoform 2 is the main form.

Its subcellular location is the cytoplasm. It is found in the peroxisome membrane. Necessary for early peroxisomal biogenesis. Acts both as a cytosolic chaperone and as an import receptor for peroxisomal membrane proteins (PMPs). Binds and stabilizes newly synthesized PMPs in the cytoplasm by interacting with their hydrophobic membrane-spanning domains, and targets them to the peroxisome membrane by binding to the integral membrane protein PEX3. Excludes CDKN2A from the nucleus and prevents its interaction with MDM2, which results in active degradation of TP53. This is Peroxisomal biogenesis factor 19 from Homo sapiens (Human).